A 218-amino-acid polypeptide reads, in one-letter code: Ribose-5-phosphate isomerase A (218 aa).

Residues 28-31, 81-84, and 94-97 each bind substrate; these read SGST, DGAD, and KGKG. The Proton acceptor role is filled by glutamate 103. Residue lysine 121 participates in substrate binding.

The protein belongs to the ribose 5-phosphate isomerase family. As to quaternary structure, homodimer.

It catalyses the reaction aldehydo-D-ribose 5-phosphate = D-ribulose 5-phosphate. It participates in carbohydrate degradation; pentose phosphate pathway; D-ribose 5-phosphate from D-ribulose 5-phosphate (non-oxidative stage): step 1/1. Functionally, catalyzes the reversible conversion of ribose-5-phosphate to ribulose 5-phosphate. This is Ribose-5-phosphate isomerase A from Wigglesworthia glossinidia brevipalpis.